The sequence spans 278 residues: Phosphatidylglycerol--prolipoprotein diacylglyceryl transferase (278 aa).

The next 4 membrane-spanning stretches (helical) occupy residues 19-39, 49-69, 83-103, and 112-132; these read WYGILMATGVLVATLMAINEG, FIDFLLWAVPIGFIGARIYYV, IIAIWNGGIAIYGGLIAGLIV, and MLPPFLMLDIIAPGVMAAQVI. Arginine 134 lines the a 1,2-diacyl-sn-glycero-3-phospho-(1'-sn-glycerol) pocket. 3 helical membrane passes run 174-194, 204-224, and 235-255; these read QPTYLYESALNLVGLILILSL, GEVFFSYVIWYAAVRFFVEGM, and IRVSQALSLILFFGAIILWVY.

It belongs to the Lgt family.

It localises to the cell membrane. The enzyme catalyses L-cysteinyl-[prolipoprotein] + a 1,2-diacyl-sn-glycero-3-phospho-(1'-sn-glycerol) = an S-1,2-diacyl-sn-glyceryl-L-cysteinyl-[prolipoprotein] + sn-glycerol 1-phosphate + H(+). Its pathway is protein modification; lipoprotein biosynthesis (diacylglyceryl transfer). Its function is as follows. Catalyzes the transfer of the diacylglyceryl group from phosphatidylglycerol to the sulfhydryl group of the N-terminal cysteine of a prolipoprotein, the first step in the formation of mature lipoproteins. The polypeptide is Phosphatidylglycerol--prolipoprotein diacylglyceryl transferase (Lactobacillus gasseri (strain ATCC 33323 / DSM 20243 / BCRC 14619 / CIP 102991 / JCM 1131 / KCTC 3163 / NCIMB 11718 / NCTC 13722 / AM63)).